We begin with the raw amino-acid sequence, 181 residues long: 6,7-dimethyl-8-ribityllumazine synthase (181 aa).

5-amino-6-(D-ribitylamino)uracil contacts are provided by residues Tyr27, 58–60, and 87–89; these read ALE and CVI. 92-93 lines the (2S)-2-hydroxy-3-oxobutyl phosphate pocket; that stretch reads ET. Catalysis depends on His95, which acts as the Proton donor. Asn120 contacts 5-amino-6-(D-ribitylamino)uracil. (2S)-2-hydroxy-3-oxobutyl phosphate is bound at residue Arg134.

It belongs to the DMRL synthase family.

It carries out the reaction (2S)-2-hydroxy-3-oxobutyl phosphate + 5-amino-6-(D-ribitylamino)uracil = 6,7-dimethyl-8-(1-D-ribityl)lumazine + phosphate + 2 H2O + H(+). The protein operates within cofactor biosynthesis; riboflavin biosynthesis; riboflavin from 2-hydroxy-3-oxobutyl phosphate and 5-amino-6-(D-ribitylamino)uracil: step 1/2. Functionally, catalyzes the formation of 6,7-dimethyl-8-ribityllumazine by condensation of 5-amino-6-(D-ribitylamino)uracil with 3,4-dihydroxy-2-butanone 4-phosphate. This is the penultimate step in the biosynthesis of riboflavin. In Methylobacterium sp. (strain 4-46), this protein is 6,7-dimethyl-8-ribityllumazine synthase.